A 454-amino-acid chain; its full sequence is N-lysine methyltransferase setd6 (454 aa).

Positions 38–265 (PKVYISTEGT…AGQELFNTYG (228 aa)) constitute an SET domain.

This sequence belongs to the class V-like SAM-binding methyltransferase superfamily. Histone-lysine methyltransferase family. SETD6 subfamily.

It is found in the nucleus. In terms of biological role, protein-lysine N-methyltransferase. The sequence is that of N-lysine methyltransferase setd6 (setd6) from Xenopus tropicalis (Western clawed frog).